We begin with the raw amino-acid sequence, 548 residues long: Chaperonin GroEL (548 aa).

Residues 29–32 (TMGP), K50, 86–90 (DGTTT), G414, 478–480 (NAA), and D494 each bind ATP.

Belongs to the chaperonin (HSP60) family. As to quaternary structure, forms a cylinder of 14 subunits composed of two heptameric rings stacked back-to-back. Interacts with the co-chaperonin GroES.

It localises to the cytoplasm. The enzyme catalyses ATP + H2O + a folded polypeptide = ADP + phosphate + an unfolded polypeptide.. Its function is as follows. Together with its co-chaperonin GroES, plays an essential role in assisting protein folding. The GroEL-GroES system forms a nano-cage that allows encapsulation of the non-native substrate proteins and provides a physical environment optimized to promote and accelerate protein folding. This Legionella pneumophila (strain Paris) protein is Chaperonin GroEL.